We begin with the raw amino-acid sequence, 249 residues long: Triosephosphate isomerase (249 aa).

The substrate site is built by Asn-12 and Lys-14. Lys-14 is modified (N6-acetyllysine). Position 21 is a phosphoserine (Ser-21). Tyr-68 carries the post-translational modification 3'-nitrotyrosine. Ser-80 bears the Phosphoserine mark. His-96 serves as the catalytic Electrophile. At Ser-106 the chain carries Phosphoserine. A Glycyl lysine isopeptide (Lys-Gly) (interchain with G-Cter in SUMO1) cross-link involves residue Lys-142. The residue at position 149 (Lys-149) is an N6-succinyllysine. Residue Lys-156 is modified to N6-acetyllysine; alternate. Lys-156 is modified (N6-succinyllysine; alternate). Phosphoserine is present on Ser-159. The active-site Proton acceptor is Glu-166. Thr-173 is subject to Phosphothreonine. Lys-194 carries the N6-acetyllysine; alternate modification. Lys-194 carries the N6-succinyllysine; alternate modification. Lys-194 bears the N6-methyllysine; alternate mark. At Ser-198 the chain carries Phosphoserine. Tyr-209 carries the 3'-nitrotyrosine modification. A Phosphoserine modification is found at Ser-212. The residue at position 214 (Thr-214) is a Phosphothreonine. Phosphoserine is present on Ser-223. Position 238 is an N6-acetyllysine (Lys-238).

This sequence belongs to the triosephosphate isomerase family. As to quaternary structure, homodimer.

The protein resides in the cytoplasm. It carries out the reaction D-glyceraldehyde 3-phosphate = dihydroxyacetone phosphate. The catalysed reaction is dihydroxyacetone phosphate = methylglyoxal + phosphate. It participates in carbohydrate degradation; glycolysis; D-glyceraldehyde 3-phosphate from glycerone phosphate: step 1/1. It functions in the pathway carbohydrate biosynthesis; gluconeogenesis. Triosephosphate isomerase is an extremely efficient metabolic enzyme that catalyzes the interconversion between dihydroxyacetone phosphate (DHAP) and D-glyceraldehyde-3-phosphate (G3P) in glycolysis and gluconeogenesis. Its function is as follows. It is also responsible for the non-negligible production of methylglyoxal a reactive cytotoxic side-product that modifies and can alter proteins, DNA and lipids. The sequence is that of Triosephosphate isomerase (TPI1) from Homo sapiens (Human).